A 371-amino-acid chain; its full sequence is uncharacterized protein (371 aa).

The chain crosses the membrane as a helical span at residues 17–33 (FLLFSVVLIIVMTTLVF).

It to S.pombe SpBC4C3.08 and SpBC4C3.09.

It is found in the membrane. This is an uncharacterized protein from Schizosaccharomyces pombe (strain 972 / ATCC 24843) (Fission yeast).